The chain runs to 415 residues: Trans-acting factor B (415 aa).

In terms of biological role, plasmid partition require REP1, REP2, and a cis-acting DNA sequence (known as STB). REP1 may act by intercalating in the yeast nuclear matrix and binding STB either directly or via REP2. This is Trans-acting factor B (B) from Kluyveromyces lactis (Yeast).